A 716-amino-acid chain; its full sequence is UvrABC system protein C (716 aa).

Residues 14-94 enclose the GIY-YIG domain; it reads AEPGCYLMKD…IKRHRPRFNI (81 aa). The UVR domain occupies 206–241; that stretch reads TELVERLHGRMDEAADALRFEDAARLRDQLQAVERS.

Belongs to the UvrC family. Interacts with UvrB in an incision complex.

It localises to the cytoplasm. Functionally, the UvrABC repair system catalyzes the recognition and processing of DNA lesions. UvrC both incises the 5' and 3' sides of the lesion. The N-terminal half is responsible for the 3' incision and the C-terminal half is responsible for the 5' incision. The chain is UvrABC system protein C from Anaeromyxobacter sp. (strain Fw109-5).